Consider the following 195-residue polypeptide: Glycerol-3-phosphate acyltransferase (195 aa).

The next 5 membrane-spanning stretches (helical) occupy residues 3-23 (EAAL…YFFT), 51-71 (GVAL…AWIG), 79-99 (LLVI…FLGF), 111-131 (IILF…LAIV), and 153-173 (LAMG…ALVV).

It belongs to the PlsY family. In terms of assembly, probably interacts with PlsX.

The protein localises to the cell membrane. It catalyses the reaction an acyl phosphate + sn-glycerol 3-phosphate = a 1-acyl-sn-glycero-3-phosphate + phosphate. Its pathway is lipid metabolism; phospholipid metabolism. Its function is as follows. Catalyzes the transfer of an acyl group from acyl-phosphate (acyl-PO(4)) to glycerol-3-phosphate (G3P) to form lysophosphatidic acid (LPA). This enzyme utilizes acyl-phosphate as fatty acyl donor, but not acyl-CoA or acyl-ACP. The sequence is that of Glycerol-3-phosphate acyltransferase from Syntrophomonas wolfei subsp. wolfei (strain DSM 2245B / Goettingen).